A 346-amino-acid chain; its full sequence is Protein-glutamate methylesterase/protein-glutamine glutaminase (346 aa).

The Response regulatory domain maps to 6-123 (KVLVVDDSAF…SLDLEKVRDL (118 aa)). Asp57 bears the 4-aspartylphosphate mark. Residues 155 to 346 (PFDKTIIVIG…ADSIVRQCKR (192 aa)) enclose the CheB-type methylesterase domain. Catalysis depends on residues Ser166, His193, and Asp289.

The protein belongs to the CheB family. Post-translationally, phosphorylated by CheA. Phosphorylation of the N-terminal regulatory domain activates the methylesterase activity.

The protein localises to the cytoplasm. The catalysed reaction is [protein]-L-glutamate 5-O-methyl ester + H2O = L-glutamyl-[protein] + methanol + H(+). The enzyme catalyses L-glutaminyl-[protein] + H2O = L-glutamyl-[protein] + NH4(+). In terms of biological role, involved in chemotaxis. Part of a chemotaxis signal transduction system that modulates chemotaxis in response to various stimuli. Catalyzes the demethylation of specific methylglutamate residues introduced into the chemoreceptors (methyl-accepting chemotaxis proteins or MCP) by CheR. Also mediates the irreversible deamidation of specific glutamine residues to glutamic acid. This chain is Protein-glutamate methylesterase/protein-glutamine glutaminase, found in Halalkalibacterium halodurans (strain ATCC BAA-125 / DSM 18197 / FERM 7344 / JCM 9153 / C-125) (Bacillus halodurans).